The following is a 311-amino-acid chain: Quinolinate synthase (311 aa).

The iminosuccinate site is built by histidine 25 and serine 42. Cysteine 87 is a binding site for [4Fe-4S] cluster. Iminosuccinate is bound by residues 113–115 (YIN) and serine 130. [4Fe-4S] cluster is bound at residue cysteine 175. Residues 201–203 (HPE) and threonine 218 contribute to the iminosuccinate site. Cysteine 268 is a [4Fe-4S] cluster binding site.

This sequence belongs to the quinolinate synthase family. Type 2 subfamily. The cofactor is [4Fe-4S] cluster.

Its subcellular location is the cytoplasm. It carries out the reaction iminosuccinate + dihydroxyacetone phosphate = quinolinate + phosphate + 2 H2O + H(+). The protein operates within cofactor biosynthesis; NAD(+) biosynthesis; quinolinate from iminoaspartate: step 1/1. Functionally, catalyzes the condensation of iminoaspartate with dihydroxyacetone phosphate to form quinolinate. The chain is Quinolinate synthase from Saccharolobus solfataricus (strain ATCC 35092 / DSM 1617 / JCM 11322 / P2) (Sulfolobus solfataricus).